The chain runs to 374 residues: Erythronate-4-phosphate dehydrogenase (374 aa).

Residues Ser45 and Thr67 each coordinate substrate. Asp147 contributes to the NAD(+) binding site. Residue Arg208 is part of the active site. Residue Asp232 coordinates NAD(+). Residue Glu237 is part of the active site. The active-site Proton donor is the His254. An NAD(+)-binding site is contributed by Gly257.

It belongs to the D-isomer specific 2-hydroxyacid dehydrogenase family. PdxB subfamily. As to quaternary structure, homodimer.

The protein localises to the cytoplasm. The enzyme catalyses 4-phospho-D-erythronate + NAD(+) = (R)-3-hydroxy-2-oxo-4-phosphooxybutanoate + NADH + H(+). It participates in cofactor biosynthesis; pyridoxine 5'-phosphate biosynthesis; pyridoxine 5'-phosphate from D-erythrose 4-phosphate: step 2/5. Functionally, catalyzes the oxidation of erythronate-4-phosphate to 3-hydroxy-2-oxo-4-phosphonooxybutanoate. The chain is Erythronate-4-phosphate dehydrogenase from Pseudoalteromonas atlantica (strain T6c / ATCC BAA-1087).